The chain runs to 212 residues: Pyridoxine/pyridoxamine 5'-phosphate oxidase (212 aa).

Substrate is bound by residues 7–10 (RREY) and lysine 66. Residues 61–66 (RIVLLK), 76–77 (YT), arginine 82, lysine 83, and glutamine 105 each bind FMN. Substrate contacts are provided by tyrosine 123, arginine 127, and serine 131. Residues 140 to 141 (QS) and tryptophan 185 contribute to the FMN site. 191–193 (RLH) contacts substrate. FMN is bound at residue arginine 195.

It belongs to the pyridoxamine 5'-phosphate oxidase family. In terms of assembly, homodimer. The cofactor is FMN.

The enzyme catalyses pyridoxamine 5'-phosphate + O2 + H2O = pyridoxal 5'-phosphate + H2O2 + NH4(+). It carries out the reaction pyridoxine 5'-phosphate + O2 = pyridoxal 5'-phosphate + H2O2. The protein operates within cofactor metabolism; pyridoxal 5'-phosphate salvage; pyridoxal 5'-phosphate from pyridoxamine 5'-phosphate: step 1/1. Its pathway is cofactor metabolism; pyridoxal 5'-phosphate salvage; pyridoxal 5'-phosphate from pyridoxine 5'-phosphate: step 1/1. Catalyzes the oxidation of either pyridoxine 5'-phosphate (PNP) or pyridoxamine 5'-phosphate (PMP) into pyridoxal 5'-phosphate (PLP). This Hahella chejuensis (strain KCTC 2396) protein is Pyridoxine/pyridoxamine 5'-phosphate oxidase.